Here is a 515-residue protein sequence, read N- to C-terminus: Protein DETOXIFICATION 42 (515 aa).

At 1-35 (MMSEDGYNTDFPRNPLYIFFSDFRSVLKFDELGLE) the chain is on the cytoplasmic side. Residues 36 to 56 (IARIALPAALALTADPIASLV) form a helical membrane-spanning segment. Residues 57-58 (DT) lie on the Extracellular side of the membrane. The chain crosses the membrane as a helical span at residues 59–79 (AFIGQIGPVELAAVGVSIALF). Residues 80–168 (NQVSRIAIFP…AKKRNIPSAS (89 aa)) lie on the Cytoplasmic side of the membrane. Residues 169–189 (SALIIGGVLGLFQAVFLISAA) form a helical membrane-spanning segment. The Extracellular portion of the chain corresponds to 190 to 211 (KPLLSFMGVKHDSPMMRPSQRY). Residues 212 to 232 (LSLRSLGAPAVLLSLAAQGVF) form a helical membrane-spanning segment. The Cytoplasmic segment spans residues 233 to 242 (RGFKDTTTPL). A helical transmembrane segment spans residues 243–263 (FATVIGDVTNIILDPIFIFVF). The Extracellular portion of the chain corresponds to 264 to 266 (RLG). The chain crosses the membrane as a helical span at residues 267–287 (VTGAATAHVISQYLMCGILLW). Residues 288–312 (KLMGQVDIFNMSTKHLQFCRFMKNG) lie on the Cytoplasmic side of the membrane. A helical membrane pass occupies residues 313-333 (FLLLMRVIAVTFCVTLSASLA). Residues 334-349 (AREGSTSMAAFQVCLQ) are Extracellular-facing. A helical transmembrane segment spans residues 350 to 370 (VWLATSLLADGYAVAGQAILA). Over 371 to 390 (SAFAKKDYKRAAATASRVLQ) the chain is Cytoplasmic. The chain crosses the membrane as a helical span at residues 391–411 (LGLVLGFVLAVILGAGLHFGA). The Extracellular segment spans residues 412–423 (RVFTKDDKVLHL). Residues 424-444 (ISIGLPFVAGTQPINALAFVF) form a helical membrane-spanning segment. At 445–453 (DGVNFGASD) the chain is on the cytoplasmic side. Residues 454-474 (FGYAAASLVMVAIVSILCLLF) traverse the membrane as a helical segment. The Extracellular segment spans residues 475 to 480 (LSSTHG). The helical transmembrane segment at 481-501 (FIGLWFGLTIYMSLRAAVGFW) threads the bilayer. Topologically, residues 502–515 (RIGTGTGPWSFLRS) are cytoplasmic.

Belongs to the multi antimicrobial extrusion (MATE) (TC 2.A.66.1) family. In terms of tissue distribution, expressed in roots, but not in shoots. Detected in the mature regions of the root, extending from above the root-hair region to the root-shoot junction.

It is found in the cell membrane. Functionally, citrate transporter critical for aluminum tolerance. Responsible for citrate exudation into the rhizosphere to protect roots from aluminum toxicity. The sequence is that of Protein DETOXIFICATION 42 from Arabidopsis thaliana (Mouse-ear cress).